The chain runs to 151 residues: Large ribosomal subunit protein uL22 (151 aa).

Over residues 1-18 (MARINYSINADPENTSKA) the composition is skewed to polar residues. Residues 1 to 23 (MARINYSINADPENTSKAMGSEL) are disordered.

The protein belongs to the universal ribosomal protein uL22 family. As to quaternary structure, part of the 50S ribosomal subunit.

This protein binds specifically to 23S rRNA. It makes multiple contacts with different domains of the 23S rRNA in the assembled 50S subunit and ribosome. Functionally, the globular domain of the protein is located near the polypeptide exit tunnel on the outside of the subunit, while an extended beta-hairpin is found that lines the wall of the exit tunnel in the center of the 70S ribosome. The chain is Large ribosomal subunit protein uL22 from Methanosarcina mazei (strain ATCC BAA-159 / DSM 3647 / Goe1 / Go1 / JCM 11833 / OCM 88) (Methanosarcina frisia).